The following is a 155-amino-acid chain: Putative pre-16S rRNA nuclease (155 aa).

Belongs to the YqgF nuclease family.

The protein resides in the cytoplasm. In terms of biological role, could be a nuclease involved in processing of the 5'-end of pre-16S rRNA. This Xanthomonas campestris pv. campestris (strain B100) protein is Putative pre-16S rRNA nuclease.